We begin with the raw amino-acid sequence, 175 residues long: Small ribosomal subunit protein bS16 (175 aa).

It belongs to the bacterial ribosomal protein bS16 family.

The chain is Small ribosomal subunit protein bS16 from Cytophaga hutchinsonii (strain ATCC 33406 / DSM 1761 / CIP 103989 / NBRC 15051 / NCIMB 9469 / D465).